The chain runs to 940 residues: MSISPLKCPCLLQRSRGKIEANRQKALARRAEKLLAEQHQKPAQSKQGPSQNLPRDPSKSGSHGIFFKQQNPSSSSHGDQRPQNPHSFSPNTSEQAKGMWQRPEEMPTACPSYRPPNQVTVAGISPPLANSPPGVPSQQLWGCELGQGHPQASLETQSTPFANTTHEPLAKVKNFQETAASSCGQPPRDPELEARMARPSTSGQNISGSVMPRTEGRLQQKAGTPLHRVVGSQQGRCIRNGERFQVKIGYNEALIAVFKSLPSRSYDPATKTWNFSMTDYGPLMKAAQRLPGITLQPLEGAEGHMESPSTSSGIIAKTGLPAAPSLAFVKGQCVLISRARFEADISYSEDLIALFKQMDSRKYDVKTRKWSFLLEEYSKLMERVRGLPQVQLDPLPKTLTLFRAQLQKTSLSPVADIPEADLSRVDSKLVSSLLPFQRAGVNFAIAQRGRLLLADDMGLGKTIQAICIAAYYRKEWPLLVVVPSSVRFTWEQAFCRWLPSLNPLDINVVVTGKDRLTDGLVNIVSFDLLSKLEKQLKPPFKVVIIDESHFLKNIKTARCRAAMPLLKVAKRVILLSGTPAMSRPAELYTQILAVRPTFFPQFHAFGLRYCGAKRQPWGWDYSGSSNLGELKLLLEEAVMLRRLKGDVLSQLPAKQARWWWSPQARSTPGPEPPWMPPPRMTTKDKTKQQQKEALILFFNRTAEAKIPSIIEYILDLLESGREKFLVFAHHKVVLDAITKELERKRVQHIRIDGSTSSADRETSASSFSCPRALRGVLSITAANMGLTFSSADLVVFGELFWNPGVLMQAEDRVHRIGQLSSVSIHYLVARGTADDYLWPLIQEKIKVLGEAGLSETNFSEMTEATDYFSKDSKQQKIYNLFQKSFEEDGNDMELLEAAESFDPGSQDTGDKLDESTLTGSPVKKKRFEFFDNWDSFTSPL.

A disordered region spans residues 1-155 (MSISPLKCPC…GQGHPQASLE (155 aa)). The residue at position 2 (Ser2) is an N-acetylserine. Mediates interaction with RPA2 stretches follow at residues 2–36 (SISPLKCPCLLQRSRGKIEANRQKALARRAEKLLA) and 11–36 (LLQRSRGKIEANRQKALARRAEKLLA). A compositionally biased stretch (basic and acidic residues) spans 17–40 (GKIEANRQKALARRAEKLLAEQHQ). A coiled-coil region spans residues 18 to 40 (KIEANRQKALARRAEKLLAEQHQ). Composition is skewed to polar residues over residues 41–53 (KPAQSKQGPSQNL) and 68–95 (KQQNPSSSSHGDQRPQNPHSFSPNTSEQ). Phosphoserine is present on residues Ser125, Ser131, Ser153, and Ser200. HARP domains lie at 229 to 299 (VVGS…QPLE) and 325 to 396 (SLAF…DPLP). One can recognise a Helicase ATP-binding domain in the interval 442–597 (NFAIAQRGRL…YTQILAVRPT (156 aa)). 455-462 (DDMGLGKT) contacts ATP. The DESH box signature appears at 546–549 (DESH). Residues 641–658 (RRLKGDVLSQLPAKQARW) carry the Nuclear localization signal motif. The interval 662 to 682 (PQARSTPGPEPPWMPPPRMTT) is disordered. A compositionally biased stretch (pro residues) spans 669–679 (GPEPPWMPPPR). Residues 708-864 (SIIEYILDLL…ETNFSEMTEA (157 aa)) form the Helicase C-terminal domain. Residues 899–918 (ESFDPGSQDTGDKLDESTLT) are disordered.

Belongs to the SNF2/RAD54 helicase family. SMARCAL1 subfamily. In terms of assembly, interacts with RPA2; the interaction is direct and mediates the recruitment by the RPA complex of SMARCAL1 to sites of DNA damage. DNA damage-regulated phosphorylation by kinases that may include ATM, ATR and PRKDC. As to expression, expressed in mature oocytes, 2-4 cell stage embryos and 8-16 cell stage embryos. Expressed at lower levels in morulae and blastocysts.

It localises to the nucleus. It catalyses the reaction ATP + H2O = ADP + phosphate + H(+). Its function is as follows. ATP-dependent annealing helicase that binds selectively to fork DNA relative to ssDNA or dsDNA and catalyzes the rewinding of the stably unwound DNA. Rewinds single-stranded DNA bubbles that are stably bound by replication protein A (RPA). Acts throughout the genome to reanneal stably unwound DNA, performing the opposite reaction of many enzymes, such as helicases and polymerases, that unwind DNA. May play an important role in DNA damage response by acting at stalled replication forks. This Bos taurus (Bovine) protein is SWI/SNF-related matrix-associated actin-dependent regulator of chromatin subfamily A-like protein 1 (SMARCAL1).